A 382-amino-acid chain; its full sequence is 8-amino-7-oxononanoate synthase (382 aa).

Substrate is bound by residues Arg-22 and Arg-29. 109-110 is a binding site for pyridoxal 5'-phosphate; it reads GF. His-134 provides a ligand contact to substrate. Pyridoxal 5'-phosphate-binding positions include Ser-182, 207–210, and 233–236; these read DDAH and TLSK. An N6-(pyridoxal phosphate)lysine modification is found at Lys-236. Residue Thr-345 coordinates substrate.

Belongs to the class-II pyridoxal-phosphate-dependent aminotransferase family. BioF subfamily. As to quaternary structure, homodimer. It depends on pyridoxal 5'-phosphate as a cofactor.

It catalyses the reaction 6-carboxyhexanoyl-[ACP] + L-alanine + H(+) = (8S)-8-amino-7-oxononanoate + holo-[ACP] + CO2. Its pathway is cofactor biosynthesis; biotin biosynthesis. In terms of biological role, catalyzes the decarboxylative condensation of pimeloyl-[acyl-carrier protein] and L-alanine to produce 8-amino-7-oxononanoate (AON), [acyl-carrier protein], and carbon dioxide. The protein is 8-amino-7-oxononanoate synthase of Granulibacter bethesdensis (strain ATCC BAA-1260 / CGDNIH1).